We begin with the raw amino-acid sequence, 161 residues long: Thy-1 membrane glycoprotein (161 aa).

The first 19 residues, 1–19 (MNLAISIALLLTVLQVSRG), serve as a signal peptide directing secretion. Gln-20 is subject to Pyrrolidone carboxylic acid. Residues 20–126 (QKVTSLTACL…SQNVTVLRDK (107 aa)) enclose the Ig-like V-type domain. Disulfide bonds link Cys-28–Cys-130 and Cys-38–Cys-104. N-linked (GlcNAc...) asparagine glycosylation is found at Asn-42 and Asn-79. The residue at position 82 (Ser-82) is a Phosphoserine. Residue Asn-119 is glycosylated (N-linked (GlcNAc...) asparagine). A lipid anchor (GPI-anchor amidated cysteine; alternate) is attached at Cys-130. A propeptide spans 131 to 161 (EGISLLAQNTSWLLLLLLSLSLLQATDFMSL) (removed in mature form). Asn-139 carries N-linked (GlcNAc...) asparagine glycosylation.

It localises to the cell membrane. May play a role in cell-cell or cell-ligand interactions during synaptogenesis and other events in the brain. The sequence is that of Thy-1 membrane glycoprotein (THY1) from Homo sapiens (Human).